The following is a 34-amino-acid chain: Mu-theraphotoxin-Pspp1 (34 aa).

3 disulfide bridges follow: Cys2-Cys17, Cys9-Cys22, and Cys16-Cys29. Phe34 carries the phenylalanine amide modification.

Belongs to the neurotoxin 10 (Hwtx-1) family. In terms of tissue distribution, expressed by the venom gland.

It is found in the secreted. In terms of biological role, voltage-gated sodium channel inhibitor. It is unclear if it selectively inhibits Nav1.7/SCN9A or shows similar potency on all sodium channels tested. According to Escoubas et al., 2006 and Nicolas et al., 2019, it is selective over Nav1.7/SCN9A (90% inhibition at 1 uM), versus Nav1.4 and Nav1.6 (35% inhibition), and shows a small inhibition on all other sodium channels (except Nav1.8/SCN10A). According to Goncalves et al., 2019, it shows a similar inhibition on almost all sodium channels tested (Nav1.1/SCN1A (IC(50)=280.3 nM), Nav1.2/SCN2A (IC(50)=73.7 nM), Nav1.3/SCN3A (IC(50)=201.5 nM), Nav1.4/SCN4A (IC(50)&gt;2100 nM), Nav1.5/SCN5A (IC(50)=710.6 nM), Nav1.6/SCN8A (IC(50)=491.2 nM), and Nav1.7/SCN9A (IC(50)=254.3-260 nM)), except Nav1.8/SCN10A. The voltage-dependence of steady-state Nav1.7/SCN9A channel activation and inactivation are not affected, suggesting that is does not act as a gating-modifier toxin but rather blocks or impedes ion flux through the channel pore. The toxin effect is partial and poorly reversible. In addition to its inhibition to sodium channels, it also shows a small inhibition on rat Kv3.4/KCNC4 potassium channels (20% inhibition at 1 uM). In vivo, when tested on pain models, it shows analgesic activity. The polypeptide is Mu-theraphotoxin-Pspp1 (Phlogiellus sp. (Tarantula)).